Here is a 360-residue protein sequence, read N- to C-terminus: Histidinol-phosphate aminotransferase (360 aa).

At Lys-222 the chain carries N6-(pyridoxal phosphate)lysine.

This sequence belongs to the class-II pyridoxal-phosphate-dependent aminotransferase family. Histidinol-phosphate aminotransferase subfamily. Requires pyridoxal 5'-phosphate as cofactor.

It carries out the reaction L-histidinol phosphate + 2-oxoglutarate = 3-(imidazol-4-yl)-2-oxopropyl phosphate + L-glutamate. The protein operates within amino-acid biosynthesis; L-histidine biosynthesis; L-histidine from 5-phospho-alpha-D-ribose 1-diphosphate: step 7/9. This Haloarcula marismortui (strain ATCC 43049 / DSM 3752 / JCM 8966 / VKM B-1809) (Halobacterium marismortui) protein is Histidinol-phosphate aminotransferase.